Here is a 407-residue protein sequence, read N- to C-terminus: Cation efflux system protein CusB (407 aa).

The signal sequence occupies residues 1–28; sequence MKKIALIIGSMIAGGIISAAGFTWVAKA.

The protein belongs to the membrane fusion protein (MFP) (TC 8.A.1) family. In terms of assembly, the cus efflux system is composed of CusA, CusB, CusC and CusF.

In terms of biological role, part of a cation efflux system that mediates resistance to copper and silver. In Escherichia coli (strain K12), this protein is Cation efflux system protein CusB (cusB).